The chain runs to 207 residues: Outer-membrane lipoprotein LolB (207 aa).

The signal sequence occupies residues 1–21; it reads MTLPDFRLIRLLPLASLVLTA. Cys-22 carries the N-palmitoyl cysteine lipid modification. Cys-22 is lipidated: S-diacylglycerol cysteine.

This sequence belongs to the LolB family. In terms of assembly, monomer.

Its subcellular location is the cell outer membrane. Its function is as follows. Plays a critical role in the incorporation of lipoproteins in the outer membrane after they are released by the LolA protein. The chain is Outer-membrane lipoprotein LolB from Salmonella schwarzengrund (strain CVM19633).